Here is a 142-residue protein sequence, read N- to C-terminus: Small ribosomal subunit protein eS6 (142 aa).

The segment at 117–142 is disordered; the sequence is EKPLDELAPKKEKKEGAAGGRAPAKK. Residues 118-132 show a composition bias toward basic and acidic residues; it reads KPLDELAPKKEKKEG.

Belongs to the eukaryotic ribosomal protein eS6 family.

The chain is Small ribosomal subunit protein eS6 from Methanocella arvoryzae (strain DSM 22066 / NBRC 105507 / MRE50).